Here is a 323-residue protein sequence, read N- to C-terminus: Beta-ketoacyl-[acyl-carrier-protein] synthase III 1 (323 aa).

Catalysis depends on residues Cys-114 and His-254. The segment at Gln-255–Arg-259 is ACP-binding. Residue Asn-284 is part of the active site.

It belongs to the thiolase-like superfamily. FabH family. As to quaternary structure, homodimer.

Its subcellular location is the cytoplasm. The enzyme catalyses malonyl-[ACP] + acetyl-CoA + H(+) = 3-oxobutanoyl-[ACP] + CO2 + CoA. Its pathway is lipid metabolism; fatty acid biosynthesis. Catalyzes the condensation reaction of fatty acid synthesis by the addition to an acyl acceptor of two carbons from malonyl-ACP. Catalyzes the first condensation reaction which initiates fatty acid synthesis and may therefore play a role in governing the total rate of fatty acid production. Possesses both acetoacetyl-ACP synthase and acetyl transacylase activities. Its substrate specificity determines the biosynthesis of branched-chain and/or straight-chain of fatty acids. This is Beta-ketoacyl-[acyl-carrier-protein] synthase III 1 from Lactiplantibacillus plantarum (strain ATCC BAA-793 / NCIMB 8826 / WCFS1) (Lactobacillus plantarum).